The chain runs to 117 residues: Large ribosomal subunit protein uL24 (117 aa).

Residues 1-10 show a composition bias toward basic residues; it reads MSKQPRKQRK. Positions 1 to 28 are disordered; it reads MSKQPRKQRKALYTAPLHKRHNSMSVHL.

This sequence belongs to the universal ribosomal protein uL24 family. Part of the 50S ribosomal subunit.

In terms of biological role, one of two assembly initiator proteins, it binds directly to the 5'-end of the 23S rRNA, where it nucleates assembly of the 50S subunit. Functionally, located at the polypeptide exit tunnel on the outside of the subunit. The protein is Large ribosomal subunit protein uL24 of Methanosphaera stadtmanae (strain ATCC 43021 / DSM 3091 / JCM 11832 / MCB-3).